Reading from the N-terminus, the 1395-residue chain is uncharacterized protein (1395 aa).

An ATP-binding site is contributed by 89–96; sequence AYKKWGKS. Disordered regions lie at residues 146-166 and 205-391; these read EEKI…LSPP and SSSS…MENR. 2 stretches are compositionally biased toward low complexity: residues 155–166 and 205–222; these read GSPSPEAELSPP and SSSS…TSSP. A compositionally biased stretch (basic and acidic residues) spans 230–269; that stretch reads EVTKERSSEVPTTVHEKTQSKSKNEKENKFSNGTIEEKPA. Low complexity predominate over residues 287-301; sequence SWSSGSSEAGSSSSG. The span at 313–328 shows a compositional bias: basic residues; it reads VKVRHKAREIRNKKGR. A compositionally biased stretch (basic and acidic residues) spans 337 to 346; that stretch reads KHGEKAERNI. Residues 349–358 show a composition bias toward low complexity; it reads GSSSSSSSGS. Over residues 369–391 the composition is skewed to basic and acidic residues; it reads PLKEIGRKDPGSTEGKDLYMENR. Ser-814 and Ser-1080 each carry phosphoserine. Residues 1110-1132 are disordered; the sequence is PISASELSPGGGSESEFESEKDE. A phosphoserine mark is found at Ser-1194 and Ser-1338. The segment covering 1346-1359 has biased composition (basic and acidic residues); it reads TGERDSGAKSDGFR. A disordered region spans residues 1346 to 1395; the sequence is TGERDSGAKSDGFRGKMCSSASSTSEETGSEGGGEWVGPSEEELFSRTHL.

This is an uncharacterized protein from Homo sapiens (Human).